The sequence spans 140 residues: MSDNEKFNDALWREKLTPEQYRICREKGTERPFTGEYWQEFRPGRYHCRCCGELLFDADTKFDAGCGWPSFYTPATKTAVREQLDTSHGMYRTEVLCRRCDCHLGHVFTDGPEPTGLRYCINSASIVLDSEQVSFTPSTL.

Positions 9-131 constitute a MsrB domain; it reads DALWREKLTP…NSASIVLDSE (123 aa). Residues Cys-48, Cys-51, Cys-97, and Cys-100 each coordinate Zn(2+). The Nucleophile role is filled by Cys-120.

This sequence belongs to the MsrB Met sulfoxide reductase family. The cofactor is Zn(2+).

The enzyme catalyses L-methionyl-[protein] + [thioredoxin]-disulfide + H2O = L-methionyl-(R)-S-oxide-[protein] + [thioredoxin]-dithiol. The polypeptide is Peptide methionine sulfoxide reductase MsrB (Cellvibrio japonicus (strain Ueda107) (Pseudomonas fluorescens subsp. cellulosa)).